A 43-amino-acid chain; its full sequence is XNPPQDWLPMNGLYYKIFDELKAWKDAEMFCRKYKPGWHLASF.

The region spanning 10–43 (MNGLYYKIFDELKAWKDAEMFCRKYKPGWHLASF) is the C-type lectin domain.

The protein belongs to the true venom lectin family. In terms of assembly, monomer. As to expression, expressed by the venom gland.

It localises to the secreted. Its activity is regulated as follows. Inhibited by 1,10-phenanthroline and EDTA. Functionally, may have both metalloproteinase and lectin activities. Induces local hemorrhage in the skin of rats. Degrades type-IV collagen, gelatin, laminin and fibronectin. Has hemagglutinating activity on red blood cells. The polypeptide is Jararafibrase-3 (Bothrops jararaca (Jararaca)).